Reading from the N-terminus, the 115-residue chain is Transmembrane protein 218 (115 aa).

3 consecutive transmembrane segments (helical) span residues 5-25 (VLGVGAGVFILALLWVAVLLL), 38-58 (FSVIFLFFGAVIITSVLLLFP), and 81-101 (YVLLAFLSAIFLGGLFLVLIH).

Belongs to the TMEM218 family. In terms of assembly, interacts with TMEM67.

The protein localises to the membrane. The protein resides in the cell projection. It is found in the cilium. Its function is as follows. May be involved in ciliary biogenesis or function. The sequence is that of Transmembrane protein 218 (TMEM218) from Homo sapiens (Human).